We begin with the raw amino-acid sequence, 73 residues long: DNA-directed RNA polymerase subunit omega (73 aa).

It belongs to the RNA polymerase subunit omega family. As to quaternary structure, the RNAP catalytic core consists of 2 alpha, 1 beta, 1 beta' and 1 omega subunit. When a sigma factor is associated with the core the holoenzyme is formed, which can initiate transcription.

The enzyme catalyses RNA(n) + a ribonucleoside 5'-triphosphate = RNA(n+1) + diphosphate. Functionally, promotes RNA polymerase assembly. Latches the N- and C-terminal regions of the beta' subunit thereby facilitating its interaction with the beta and alpha subunits. The protein is DNA-directed RNA polymerase subunit omega of Oleidesulfovibrio alaskensis (strain ATCC BAA-1058 / DSM 17464 / G20) (Desulfovibrio alaskensis).